We begin with the raw amino-acid sequence, 339 residues long: Phosphatidylglycerol--prolipoprotein diacylglyceryl transferase (339 aa).

The next 3 membrane-spanning stretches (helical) occupy residues 43–63, 81–101, and 121–141; these read FTIA…YWLG, ILWM…LTSW, and NGGI…IYFA. Arginine 167 contacts a 1,2-diacyl-sn-glycero-3-phospho-(1'-sn-glycerol). The next 2 helical transmembrane spans lie at 231 to 251 and 300 to 320; these read FTQL…YFWL and LWTD…WMLW.

The protein belongs to the Lgt family.

The protein resides in the cell membrane. It carries out the reaction L-cysteinyl-[prolipoprotein] + a 1,2-diacyl-sn-glycero-3-phospho-(1'-sn-glycerol) = an S-1,2-diacyl-sn-glyceryl-L-cysteinyl-[prolipoprotein] + sn-glycerol 1-phosphate + H(+). It functions in the pathway protein modification; lipoprotein biosynthesis (diacylglyceryl transfer). Catalyzes the transfer of the diacylglyceryl group from phosphatidylglycerol to the sulfhydryl group of the N-terminal cysteine of a prolipoprotein, the first step in the formation of mature lipoproteins. The chain is Phosphatidylglycerol--prolipoprotein diacylglyceryl transferase from Deinococcus radiodurans (strain ATCC 13939 / DSM 20539 / JCM 16871 / CCUG 27074 / LMG 4051 / NBRC 15346 / NCIMB 9279 / VKM B-1422 / R1).